Consider the following 335-residue polypeptide: Tetraacyldisaccharide 4'-kinase (335 aa).

Residue 58–65 (VVGGSGKT) coordinates ATP.

The protein belongs to the LpxK family.

The catalysed reaction is a lipid A disaccharide + ATP = a lipid IVA + ADP + H(+). It participates in glycolipid biosynthesis; lipid IV(A) biosynthesis; lipid IV(A) from (3R)-3-hydroxytetradecanoyl-[acyl-carrier-protein] and UDP-N-acetyl-alpha-D-glucosamine: step 6/6. Functionally, transfers the gamma-phosphate of ATP to the 4'-position of a tetraacyldisaccharide 1-phosphate intermediate (termed DS-1-P) to form tetraacyldisaccharide 1,4'-bis-phosphate (lipid IVA). The polypeptide is Tetraacyldisaccharide 4'-kinase (Hydrogenovibrio crunogenus (strain DSM 25203 / XCL-2) (Thiomicrospira crunogena)).